The following is a 625-amino-acid chain: Enolase 4 (625 aa).

The segment at 184 to 226 is disordered; it reads YSTVPTPLPPVPPPPPPPPPTKKKGQKPGRKDTITEKPIAPAE. A compositionally biased stretch (pro residues) spans 189-203; the sequence is TPLPPVPPPPPPPPP. Val300 serves as a coordination point for substrate. The disordered stretch occupies residues 331-350; the sequence is PSPPKAETKKGHDGSKRGQQ. Residues 336 to 346 are compositionally biased toward basic and acidic residues; the sequence is AETKKGHDGSK. Asn497 functions as the Proton acceptor in the catalytic mechanism. Gly548 contributes to the substrate binding site. Residues 604–625 form a disordered region; sequence PLVPTFPTQGVEESAETGASSG.

Belongs to the enolase family. Interacts with ENO1 and AKAP4. Synthesized as an approximately 70-kDa precursor, which then undergoes proteolytic cleavage to an approximately 60-kDa enzyme; HOATZ associates directly or indirectly with ENO4 to mediate this process before its transport to mature flagella.

The catalysed reaction is (2R)-2-phosphoglycerate = phosphoenolpyruvate + H2O. Its pathway is carbohydrate degradation; glycolysis; pyruvate from D-glyceraldehyde 3-phosphate: step 4/5. In terms of biological role, may be required for sperm motility and function. This chain is Enolase 4, found in Homo sapiens (Human).